Consider the following 126-residue polypeptide: B3 domain-containing protein At5g54067 (126 aa).

The segment at residues 20–118 (SDIVGNVVLP…KFVVLNFQYS (99 aa)) is a DNA-binding region (TF-B3).

It localises to the nucleus. The chain is B3 domain-containing protein At5g54067 from Arabidopsis thaliana (Mouse-ear cress).